The primary structure comprises 497 residues: Glycerol kinase (497 aa).

An ADP-binding site is contributed by Thr11. Residues Thr11, Ser12, and Ser13 each coordinate ATP. Position 11 (Thr11) interacts with sn-glycerol 3-phosphate. Arg15 contributes to the ADP binding site. Sn-glycerol 3-phosphate-binding residues include Arg81, Glu82, Tyr133, and Asp242. Residues Arg81, Glu82, Tyr133, Asp242, and Gln243 each coordinate glycerol. 2 residues coordinate ADP: Thr264 and Gly307. The ATP site is built by Thr264, Gly307, Gln311, and Gly412. ADP-binding residues include Gly412 and Asn416.

Belongs to the FGGY kinase family.

The catalysed reaction is glycerol + ATP = sn-glycerol 3-phosphate + ADP + H(+). The protein operates within polyol metabolism; glycerol degradation via glycerol kinase pathway; sn-glycerol 3-phosphate from glycerol: step 1/1. With respect to regulation, inhibited by fructose 1,6-bisphosphate (FBP). Key enzyme in the regulation of glycerol uptake and metabolism. Catalyzes the phosphorylation of glycerol to yield sn-glycerol 3-phosphate. The sequence is that of Glycerol kinase from Leptothrix cholodnii (strain ATCC 51168 / LMG 8142 / SP-6) (Leptothrix discophora (strain SP-6)).